The sequence spans 369 residues: Phenylalanine--tRNA ligase alpha subunit (369 aa).

Residue Glu269 coordinates Mg(2+).

The protein belongs to the class-II aminoacyl-tRNA synthetase family. Phe-tRNA synthetase alpha subunit type 1 subfamily. As to quaternary structure, tetramer of two alpha and two beta subunits. It depends on Mg(2+) as a cofactor.

It localises to the cytoplasm. It carries out the reaction tRNA(Phe) + L-phenylalanine + ATP = L-phenylalanyl-tRNA(Phe) + AMP + diphosphate + H(+). The chain is Phenylalanine--tRNA ligase alpha subunit from Brucella anthropi (strain ATCC 49188 / DSM 6882 / CCUG 24695 / JCM 21032 / LMG 3331 / NBRC 15819 / NCTC 12168 / Alc 37) (Ochrobactrum anthropi).